The following is a 265-amino-acid chain: tRNA pseudouridine synthase A (265 aa).

Residue Asp58 is the Nucleophile of the active site. Tyr116 is a substrate binding site.

Belongs to the tRNA pseudouridine synthase TruA family. Homodimer.

The enzyme catalyses uridine(38/39/40) in tRNA = pseudouridine(38/39/40) in tRNA. Functionally, formation of pseudouridine at positions 38, 39 and 40 in the anticodon stem and loop of transfer RNAs. The protein is tRNA pseudouridine synthase A of Neisseria gonorrhoeae (strain ATCC 700825 / FA 1090).